Reading from the N-terminus, the 324-residue chain is Formimidoylglutamase (324 aa).

Mn(2+) is bound by residues His124, Asp153, His155, Asp157, Asp245, and Asp247.

Belongs to the arginase family. Requires Mn(2+) as cofactor.

The catalysed reaction is N-formimidoyl-L-glutamate + H2O = formamide + L-glutamate. It participates in amino-acid degradation; L-histidine degradation into L-glutamate; L-glutamate from N-formimidoyl-L-glutamate (hydrolase route): step 1/1. In terms of biological role, catalyzes the conversion of N-formimidoyl-L-glutamate to L-glutamate and formamide. This is Formimidoylglutamase from Hahella chejuensis (strain KCTC 2396).